Here is a 962-residue protein sequence, read N- to C-terminus: Alpha-glucan phosphorylase 1 (962 aa).

Residues 1–63 (MDTMRISGVS…RSFLSVKSIS (63 aa)) constitute a chloroplast transit peptide. The tract at residues 525 to 552 (AKDAQNGVKTEQEEEKTAGEEEEDEVIP) is disordered. At Lys-808 the chain carries N6-(pyridoxal phosphate)lysine.

The protein belongs to the glycogen phosphorylase family. Requires pyridoxal 5'-phosphate as cofactor.

It localises to the plastid. The protein localises to the chloroplast stroma. It carries out the reaction [(1-&gt;4)-alpha-D-glucosyl](n) + phosphate = [(1-&gt;4)-alpha-D-glucosyl](n-1) + alpha-D-glucose 1-phosphate. Functionally, phosphorylase is an important allosteric enzyme in carbohydrate metabolism. Enzymes from different sources differ in their regulatory mechanisms and in their natural substrates. However, all known phosphorylases share catalytic and structural properties. May be not required for the degradation of starch, but the phosphorolysis of starch may play an important role in water stress tolerance. In Arabidopsis thaliana (Mouse-ear cress), this protein is Alpha-glucan phosphorylase 1 (PHS1).